Consider the following 740-residue polypeptide: Platelet endothelial cell adhesion molecule (740 aa).

Residues 1–27 (MRLRWTQGGNMWLGVLLTLQLCSSLEG) form the signal peptide. Residues 28-602 (QENSFTINSI…VRVYLAPWKK (575 aa)) are Extracellular-facing. 3 Ig-like C2-type domains span residues 35-126 (NSIH…YKVV), 145-223 (GGVV…DSVR), and 236-315 (PKFH…SKVS). N-linked (GlcNAc...) asparagine glycans are attached at residues asparagine 52 and asparagine 84. Disulfide bonds link cysteine 57/cysteine 109, cysteine 152/cysteine 206, and cysteine 256/cysteine 304. Asparagine 284, asparagine 301, asparagine 320, asparagine 357, asparagine 372, asparagine 436, asparagine 456, and asparagine 552 each carry an N-linked (GlcNAc...) asparagine glycan. 3 Ig-like C2-type domains span residues 328-404 (PKLK…VQIA), 425-494 (GQTI…KVLR), and 500-592 (PVEE…NILA). 3 disulfides stabilise this stretch: cysteine 347–cysteine 387, cysteine 432–cysteine 477, and cysteine 524–cysteine 573. Residues 603–621 (GLIAVVVIAVIIAVLLLGA) traverse the membrane as a helical segment. Over 622–740 (RFYFLKKSKA…SRTEGSLDGT (119 aa)) the chain is Cytoplasmic. 2 consecutive short sequence motifs (ITIM motif) follow at residues 690–695 (VEYTEV) and 713–718 (TVYSEI). Tyrosine 692 and tyrosine 715 each carry phosphotyrosine; by FER. Residues 697–740 (VTSPEPHRGLGTKGTETVYSEIRKADPDLVENRYSRTEGSLDGT) form a disordered region. A membrane-bound segment which detaches upon phosphorylation region spans residues 711-731 (TETVYSEIRKADPDLVENRYS). The segment covering 717–732 (EIRKADPDLVENRYSR) has biased composition (basic and acidic residues). A may play a role in cytoprotective signaling region spans residues 723-740 (PDLVENRYSRTEGSLDGT). Serine 731 and serine 736 each carry phosphoserine.

In terms of assembly, trans-homodimer (via Ig-like C2-type 1 and Ig-like C2-type 2 domains); trans-homodimerization is required for cell-cell interaction. Forms a complex with BDKRB2 and GNAQ. Interacts with BDKRB2 and GNAQ. Interacts with PTPN11; Tyr-715 is critical for PTPN11 recruitment. Interacts with FER. Interacts with CD177; the interaction is Ca(2+)-dependent; the interaction is direct. Phosphorylated on Ser and Tyr residues by src kinases after cellular activation. Upon activation, phosphorylated on Ser-731 which probably initiates the dissociation of the membrane-interaction segment (residues 711-731) from the cell membrane allowing the sequential phosphorylation of Tyr-715 and Tyr-692. Constitutively phosphorylated on Ser-736 in resting platelets. Phosphorylated on tyrosine residues by FER and FES in response to FCER1 activation. In endothelial cells Fyn mediates mechanical-force (stretch or pull) induced tyrosine phosphorylation. Post-translationally, palmitoylation by ZDHHC21 is necessary for cell surface expression in endothelial cells and enrichment in membrane rafts.

The protein localises to the cell membrane. Its subcellular location is the membrane raft. The protein resides in the cell junction. Cell adhesion molecule which is required for leukocyte transendothelial migration (TEM) under most inflammatory conditions. Tyr-692 plays a critical role in TEM and is required for efficient trafficking of PECAM1 to and from the lateral border recycling compartment (LBRC) and is also essential for the LBRC membrane to be targeted around migrating leukocytes. Trans-homophilic interaction may play a role in endothelial cell-cell adhesion via cell junctions. Heterophilic interaction with CD177 plays a role in transendothelial migration of neutrophils. Homophilic ligation of PECAM1 prevents macrophage-mediated phagocytosis of neighboring viable leukocytes by transmitting a detachment signal. Promotes macrophage-mediated phagocytosis of apoptotic leukocytes by tethering them to the phagocytic cells; PECAM1-mediated detachment signal appears to be disabled in apoptotic leukocytes. Modulates bradykinin receptor BDKRB2 activation. Regulates bradykinin- and hyperosmotic shock-induced ERK1/2 activation in endothelial cells. Induces susceptibility to atherosclerosis. This is Platelet endothelial cell adhesion molecule (PECAM1) from Sus scrofa (Pig).